The sequence spans 326 residues: 3-dehydrosphinganine reductase TSC10A (326 aa).

Topologically, residues 1-7 (MAAISPL) are lumenal. A helical transmembrane segment spans residues 8 to 28 (FLLFLIPIIPLSLLAILALIV). Over 29–264 (RPRPIKIPIK…KAMDGIKAGN (236 aa)) the chain is Cytoplasmic. 7 residues coordinate NADPH: G46, S48, S49, G50, R71, K75, and D97. The GXSXG motif lies at 46-50 (GGSSG). The active-site Proton donor is the S174. The active-site Proton acceptor is Y188. NADP(+) is bound by residues Y188 and K192. Residue K192 is the Lowers pKa of active site Tyr of the active site. The chain crosses the membrane as a helical span at residues 265–285 (FTVSCNFEGFLLSLATTGMSP). Residues 286–288 (QRS) are Lumenal-facing. A helical membrane pass occupies residues 289–309 (FWLAFLEVITAGPIRLIALFF). The Cytoplasmic segment spans residues 310 to 326 (QWDWYKAIEKWSKTKTK).

The protein belongs to the short-chain dehydrogenases/reductases (SDR) family. As to expression, expressed in roots, leaves, stems, flowers and siliques.

The protein resides in the endoplasmic reticulum membrane. The catalysed reaction is sphinganine + NADP(+) = 3-oxosphinganine + NADPH + H(+). The protein operates within lipid metabolism; sphingolipid metabolism. Catalyzes the reduction of 3'-oxosphinganine (3-ketodihydrosphingosine/KDS) to sphinganine (dihydrosphingosine/DHS), the second step of de novo sphingolipid biosynthesis. In plants, sphingolipids seems to play a critical role in mineral ion homeostasis, most likely through their involvement in the ion transport functionalities of membrane systems in the root. Lacks stereospecificity and can also produce L-threo-DHS in addition to D-erythro-DHS. In Arabidopsis thaliana (Mouse-ear cress), this protein is 3-dehydrosphinganine reductase TSC10A (TSC10A).